The primary structure comprises 359 residues: Ribosomal RNA small subunit methyltransferase mra1 (359 aa).

Over residues 1–10 (MPTYSKRKSR) the composition is skewed to basic residues. Disordered stretches follow at residues 1–62 (MPTY…EDEE) and 98–118 (VKSD…VKAR). Ser-12 bears the Phosphoserine mark. The segment covering 18–39 (KTNQPKFIKRSQSSETITSGET) has biased composition (polar residues). The residue at position 33 (Thr-33) is a Phosphothreonine. Ser-100 carries the phosphoserine modification. Residues Leu-287, Gly-314, 319-321 (GPD), and 334-339 (ISDYPL) contribute to the S-adenosyl-L-methionine site.

This sequence belongs to the class IV-like SAM-binding methyltransferase superfamily. RNA methyltransferase NEP1 family. In terms of assembly, homodimer.

The protein localises to the nucleus. It is found in the nucleolus. The enzyme catalyses a pseudouridine in rRNA + S-adenosyl-L-methionine = an N(1)-methylpseudouridine in rRNA + S-adenosyl-L-homocysteine + H(+). S-adenosyl-L-methionine-dependent pseudouridine N(1)-methyltransferase that methylates the pseudouridine corresponding to position 1189 (Psi1189) in S.cerevisiae 18S rRNA. Involved the biosynthesis of the hypermodified N1-methyl-N3-(3-amino-3-carboxypropyl) pseudouridine (m1acp3-Psi) conserved in eukaryotic 18S rRNA. Also has an essential role in 40S ribosomal subunit biogenesis independent on its methyltransferase activity, facilitating the incorporation of ribosomal protein S19 during the formation of pre-ribosomes. Essential for cell growth. It also has a key role in promoting the mating function. This Schizosaccharomyces pombe (strain 972 / ATCC 24843) (Fission yeast) protein is Ribosomal RNA small subunit methyltransferase mra1.